The chain runs to 184 residues: Acireductone dioxygenase (184 aa).

4 residues coordinate Fe(2+): H97, H99, E103, and H141. Ni(2+)-binding residues include H97, H99, E103, and H141.

Belongs to the acireductone dioxygenase (ARD) family. Monomer. Requires Fe(2+) as cofactor. It depends on Ni(2+) as a cofactor.

The enzyme catalyses 1,2-dihydroxy-5-(methylsulfanyl)pent-1-en-3-one + O2 = 3-(methylsulfanyl)propanoate + CO + formate + 2 H(+). It carries out the reaction 1,2-dihydroxy-5-(methylsulfanyl)pent-1-en-3-one + O2 = 4-methylsulfanyl-2-oxobutanoate + formate + 2 H(+). It participates in amino-acid biosynthesis; L-methionine biosynthesis via salvage pathway; L-methionine from S-methyl-5-thio-alpha-D-ribose 1-phosphate: step 5/6. Its function is as follows. Catalyzes 2 different reactions between oxygen and the acireductone 1,2-dihydroxy-3-keto-5-methylthiopentene (DHK-MTPene) depending upon the metal bound in the active site. Fe-containing acireductone dioxygenase (Fe-ARD) produces formate and 2-keto-4-methylthiobutyrate (KMTB), the alpha-ketoacid precursor of methionine in the methionine recycle pathway. Ni-containing acireductone dioxygenase (Ni-ARD) produces methylthiopropionate, carbon monoxide and formate, and does not lie on the methionine recycle pathway. The chain is Acireductone dioxygenase from Parvibaculum lavamentivorans (strain DS-1 / DSM 13023 / NCIMB 13966).